The sequence spans 404 residues: Subtilisin-like protease 3 (404 aa).

The N-terminal stretch at 1–20 (MLFSKSLVALVACFLPLIVS) is a signal peptide. The propeptide occupies 21–114 (ATELKLRNAA…VDKDVKVSAY (94 aa)). The region spanning 38-112 (SYIVVYKDID…AYVDKDVKVS (75 aa)) is the Inhibitor I9 domain. Positions 123–404 (PWGLDRISHR…DNLAYNDDGY (282 aa)) constitute a Peptidase S8 domain. Asn-133 carries N-linked (GlcNAc...) asparagine glycosylation. Active-site charge relay system residues include Asp-158 and His-190. N-linked (GlcNAc...) asparagine glycans are attached at residues Asn-243, Asn-251, Asn-286, Asn-307, and Asn-340. Ser-347 (charge relay system) is an active-site residue. Asn-366 is a glycosylation site (N-linked (GlcNAc...) asparagine).

Belongs to the peptidase S8 family.

The protein resides in the secreted. Functionally, secreted subtilisin-like serine endopeptidase. Mediates the degradation of collagen, the major structural protein in the mammalian host. Degrades the nonhelical regions of collagen that function in the cross-linking of the helical components. May function as virulence factor involved in epidermal wing necrosis observed in white nose syndrome (WNS) in bats. This Pseudogymnoascus destructans (strain ATCC MYA-4855 / 20631-21) (Bat white-nose syndrome fungus) protein is Subtilisin-like protease 3.